We begin with the raw amino-acid sequence, 192 residues long: Xanthine phosphoribosyltransferase (192 aa).

Xanthine is bound by residues Leu-20 and Asn-27. Residue 128–132 coordinates 5-phospho-alpha-D-ribose 1-diphosphate; sequence AHGEA. Lys-156 provides a ligand contact to xanthine.

The protein belongs to the purine/pyrimidine phosphoribosyltransferase family. Xpt subfamily. Homodimer.

The protein resides in the cytoplasm. The catalysed reaction is XMP + diphosphate = xanthine + 5-phospho-alpha-D-ribose 1-diphosphate. Its pathway is purine metabolism; XMP biosynthesis via salvage pathway; XMP from xanthine: step 1/1. Functionally, converts the preformed base xanthine, a product of nucleic acid breakdown, to xanthosine 5'-monophosphate (XMP), so it can be reused for RNA or DNA synthesis. The protein is Xanthine phosphoribosyltransferase of Lactobacillus acidophilus (strain ATCC 700396 / NCK56 / N2 / NCFM).